A 316-amino-acid polypeptide reads, in one-letter code: Beta-ketoacyl-[acyl-carrier-protein] synthase III (316 aa).

Residues Cys-112 and His-243 contribute to the active site. Positions 244–248 (QANLR) are ACP-binding. The active site involves Asn-273.

The protein belongs to the thiolase-like superfamily. FabH family. As to quaternary structure, homodimer.

It localises to the cytoplasm. It catalyses the reaction malonyl-[ACP] + acetyl-CoA + H(+) = 3-oxobutanoyl-[ACP] + CO2 + CoA. It participates in lipid metabolism; fatty acid biosynthesis. Catalyzes the condensation reaction of fatty acid synthesis by the addition to an acyl acceptor of two carbons from malonyl-ACP. Catalyzes the first condensation reaction which initiates fatty acid synthesis and may therefore play a role in governing the total rate of fatty acid production. Possesses both acetoacetyl-ACP synthase and acetyl transacylase activities. Its substrate specificity determines the biosynthesis of branched-chain and/or straight-chain of fatty acids. In Yersinia pestis (strain Pestoides F), this protein is Beta-ketoacyl-[acyl-carrier-protein] synthase III.